Reading from the N-terminus, the 154-residue chain is Ribosome maturation factor RimP (154 aa).

The protein belongs to the RimP family.

The protein localises to the cytoplasm. Its function is as follows. Required for maturation of 30S ribosomal subunits. The polypeptide is Ribosome maturation factor RimP (Ruthia magnifica subsp. Calyptogena magnifica).